The following is a 317-amino-acid chain: Melanocyte-stimulating hormone receptor (317 aa).

Residues 1–37 (MPVQGSQRRLLGSLNSTPTATPHLGLAANQTGARCRE) lie on the Extracellular side of the membrane. N29 carries an N-linked (GlcNAc...) asparagine glycan. A helical membrane pass occupies residues 38-63 (VSIPDGLFLSLGLVSLVENVLVVTAI). Residues 64–72 (AKNRNLHSP) lie on the Cytoplasmic side of the membrane. Residues 73-93 (MYCFICCLALSDLLVSGSNML) form a helical membrane-spanning segment. Residues 94 to 118 (ETAVTLLLEAGALVARAAVVQQLDN) are Extracellular-facing. Residues 119 to 140 (VIDVITCSSMLSSLCFLGAIAV) traverse the membrane as a helical segment. Over 141-163 (DRYISIFYALRYHSIVTLPRAQR) the chain is Cytoplasmic. A helical transmembrane segment spans residues 164-183 (AIAAIWVASVLCSTLFIAYY). Residues 184-191 (DHAAVLLC) are Extracellular-facing. Residues 192–211 (LVVFFLAMLVLMAVLYVHML) form a helical membrane-spanning segment. At 212-240 (ARACQHAQGIARLHKRQRLAHQGFGLKGA) the chain is on the cytoplasmic side. Residues 241–266 (ATLTILLGIFFLCWGPFFLHLTLIVL) form a helical membrane-spanning segment. Topologically, residues 267-279 (CPQHPTCSCIFKN) are extracellular. The chain crosses the membrane as a helical span at residues 280–300 (FNLFLALIICNAIIDPLIYAF). At 301–317 (RSQELRRTLKEVLLCSW) the chain is on the cytoplasmic side. C315 carries S-palmitoyl cysteine lipidation.

Belongs to the G-protein coupled receptor 1 family. Interacts with MGRN1, but does not undergo MGRN1-mediated ubiquitination; this interaction competes with GNAS-binding and thus inhibits agonist-induced cAMP production. Interacts with OPN3; the interaction results in a decrease in MC1R-mediated cAMP signaling and ultimately a decrease in melanin production in melanocytes. As to expression, expressed in the adrenal gland.

It localises to the cell membrane. In terms of biological role, receptor for MSH (alpha, beta and gamma) and ACTH. The activity of this receptor is mediated by G proteins which activate adenylate cyclase. Mediates melanogenesis, the production of eumelanin (black/brown) and phaeomelanin (red/yellow), via regulation of cAMP signaling in melanocytes. The chain is Melanocyte-stimulating hormone receptor (MC1R) from Macaca mulatta (Rhesus macaque).